Consider the following 493-residue polypeptide: Glutamyl-tRNA(Gln) amidotransferase subunit A (493 aa).

Active-site charge relay system residues include Lys78 and Ser158. The active-site Acyl-ester intermediate is Ser182.

It belongs to the amidase family. GatA subfamily. In terms of assembly, heterotrimer of A, B and C subunits.

It catalyses the reaction L-glutamyl-tRNA(Gln) + L-glutamine + ATP + H2O = L-glutaminyl-tRNA(Gln) + L-glutamate + ADP + phosphate + H(+). Allows the formation of correctly charged Gln-tRNA(Gln) through the transamidation of misacylated Glu-tRNA(Gln) in organisms which lack glutaminyl-tRNA synthetase. The reaction takes place in the presence of glutamine and ATP through an activated gamma-phospho-Glu-tRNA(Gln). In Rickettsia africae (strain ESF-5), this protein is Glutamyl-tRNA(Gln) amidotransferase subunit A.